A 159-amino-acid polypeptide reads, in one-letter code: Phosphopantetheine adenylyltransferase (159 aa).

H16 is an ATP binding site. 3 residues coordinate substrate: K40, M72, and R86. Residues 87-89, E97, and 122-128 each bind ATP; these read GLR and YQYLSAS.

Belongs to the bacterial CoaD family. Homohexamer. Mg(2+) is required as a cofactor.

It is found in the cytoplasm. It carries out the reaction (R)-4'-phosphopantetheine + ATP + H(+) = 3'-dephospho-CoA + diphosphate. It functions in the pathway cofactor biosynthesis; coenzyme A biosynthesis; CoA from (R)-pantothenate: step 4/5. Functionally, reversibly transfers an adenylyl group from ATP to 4'-phosphopantetheine, yielding dephospho-CoA (dPCoA) and pyrophosphate. The protein is Phosphopantetheine adenylyltransferase of Dehalococcoides mccartyi (strain CBDB1).